The chain runs to 118 residues: uncharacterized protein (118 aa).

The protein localises to the mitochondrion. This is an uncharacterized protein from Arabidopsis thaliana (Mouse-ear cress).